Consider the following 241-residue polypeptide: 1-(5-phosphoribosyl)-5-[(5-phosphoribosylamino)methylideneamino] imidazole-4-carboxamide isomerase (241 aa).

The active-site Proton acceptor is Asp-11. Asp-130 acts as the Proton donor in catalysis.

It belongs to the HisA/HisF family.

The protein localises to the cytoplasm. It catalyses the reaction 1-(5-phospho-beta-D-ribosyl)-5-[(5-phospho-beta-D-ribosylamino)methylideneamino]imidazole-4-carboxamide = 5-[(5-phospho-1-deoxy-D-ribulos-1-ylimino)methylamino]-1-(5-phospho-beta-D-ribosyl)imidazole-4-carboxamide. Its pathway is amino-acid biosynthesis; L-histidine biosynthesis; L-histidine from 5-phospho-alpha-D-ribose 1-diphosphate: step 4/9. The protein is 1-(5-phosphoribosyl)-5-[(5-phosphoribosylamino)methylideneamino] imidazole-4-carboxamide isomerase of Acidothermus cellulolyticus (strain ATCC 43068 / DSM 8971 / 11B).